Reading from the N-terminus, the 147-residue chain is Deoxyuridine 5'-triphosphate nucleotidohydrolase (147 aa).

Substrate contacts are provided by residues 67–69 (RSG), N80, and 84–86 (TID).

The protein belongs to the dUTPase family. It depends on Mg(2+) as a cofactor.

The enzyme catalyses dUTP + H2O = dUMP + diphosphate + H(+). It functions in the pathway pyrimidine metabolism; dUMP biosynthesis; dUMP from dCTP (dUTP route): step 2/2. Its function is as follows. This enzyme is involved in nucleotide metabolism: it produces dUMP, the immediate precursor of thymidine nucleotides and it decreases the intracellular concentration of dUTP so that uracil cannot be incorporated into DNA. The protein is Deoxyuridine 5'-triphosphate nucleotidohydrolase of Anaeromyxobacter dehalogenans (strain 2CP-C).